Reading from the N-terminus, the 642-residue chain is 1,4-alpha-glucan branching enzyme GlgB (642 aa).

Catalysis depends on D304, which acts as the Nucleophile. The Proton donor role is filled by E355.

Belongs to the glycosyl hydrolase 13 family. GlgB subfamily. As to quaternary structure, monomer.

It carries out the reaction Transfers a segment of a (1-&gt;4)-alpha-D-glucan chain to a primary hydroxy group in a similar glucan chain.. Its pathway is glycan biosynthesis; glycogen biosynthesis. Its function is as follows. Catalyzes the formation of the alpha-1,6-glucosidic linkages in glycogen by scission of a 1,4-alpha-linked oligosaccharide from growing alpha-1,4-glucan chains and the subsequent attachment of the oligosaccharide to the alpha-1,6 position. This Streptococcus pneumoniae serotype 2 (strain D39 / NCTC 7466) protein is 1,4-alpha-glucan branching enzyme GlgB.